Here is a 177-residue protein sequence, read N- to C-terminus: MSRVGKSPITVPKGAEISINGANVTVKGPLGTLTHNLHPSVGLKQEDGVLTVVLNNDSPEAGAQSGTARALVNNMVVGVTTGFERKLSLVGVGYRAAAQGETLKLQLGFSHDIIYNLPKGVKAETPTQTEIIIKGSNKQQVGQVAAEVRAYRSPEPYKGKGVRYVDEVVHLKETKKK.

This sequence belongs to the universal ribosomal protein uL6 family. Part of the 50S ribosomal subunit.

Functionally, this protein binds to the 23S rRNA, and is important in its secondary structure. It is located near the subunit interface in the base of the L7/L12 stalk, and near the tRNA binding site of the peptidyltransferase center. In Polynucleobacter asymbioticus (strain DSM 18221 / CIP 109841 / QLW-P1DMWA-1) (Polynucleobacter necessarius subsp. asymbioticus), this protein is Large ribosomal subunit protein uL6.